A 178-amino-acid chain; its full sequence is MHSSALLCCLVLLTGVRASPGQGTQSENSCTHFPGNLPNMLRDLRDAFSRVKTFFQMKDQLDNLLLKESLLEDFKGYLGCQALXEMIQFYLEEVMPQAENQDPDIKVHVNSLGENLKTLRLRLRRCHRFLPCENKSKAVEQVKNAFNKLQEKGIYKAMSEFDIFINYIEAYMTMKIRN.

Residues 1–18 form the signal peptide; that stretch reads MHSSALLCCLVLLTGVRA. Disulfide bonds link Cys30/Cys126 and Cys80/Cys132. N-linked (GlcNAc...) asparagine glycosylation occurs at Asn134.

This sequence belongs to the IL-10 family. Homodimer. Interacts with IL10RA and IL10RB.

The protein localises to the secreted. Its function is as follows. Major immune regulatory cytokine that acts on many cells of the immune system where it has profound anti-inflammatory functions, limiting excessive tissue disruption caused by inflammation. Mechanistically, IL10 binds to its heterotetrameric receptor comprising IL10RA and IL10RB leading to JAK1 and STAT2-mediated phosphorylation of STAT3. In turn, STAT3 translocates to the nucleus where it drives expression of anti-inflammatory mediators. Targets antigen-presenting cells (APCs) such as macrophages and monocytes and inhibits their release of pro-inflammatory cytokines including granulocyte-macrophage colony-stimulating factor /GM-CSF, granulocyte colony-stimulating factor/G-CSF, IL-1 alpha, IL-1 beta, IL-6, IL-8 and TNF-alpha. Also interferes with antigen presentation by reducing the expression of MHC-class II and co-stimulatory molecules, thereby inhibiting their ability to induce T cell activation. In addition, controls the inflammatory response of macrophages by reprogramming essential metabolic pathways including mTOR signaling. This is Interleukin-10 (IL10) from Pan troglodytes (Chimpanzee).